The primary structure comprises 508 residues: DASH complex subunit ASK1 (508 aa).

2 disordered regions span residues 86–138 (LVDG…TLSS) and 150–355 (SRAA…QLRS). Residues 116 to 138 (EPSQYTPRPQTSAGGHDTTTLSS) show a composition bias toward polar residues. The span at 161 to 175 (QHHDDSSVLTDRDGD) shows a compositional bias: basic and acidic residues. Residues 201–213 (DEMDIDMDEEDSE) show a composition bias toward acidic residues. Positions 229–238 (RYYDDDHGFE) are enriched in basic and acidic residues. A compositionally biased stretch (acidic residues) spans 239 to 258 (QGEEEEDEEEEEEEEEEEEG). A compositionally biased stretch (basic and acidic residues) spans 326-338 (IKQEDTEKKRPLW).

The protein belongs to the DASH complex ASK1 family. Component of the DASH complex consisting of ASK1, DAD1, DAD2, DAD3, DAD4, DAM1, DUO1, HSK3, SPC19 and SPC34, with a stoichiometry of one copy of each subunit per complex. Multiple DASH complexes oligomerize to form a ring that encircles spindle microtubules and organizes the rod-like NDC80 complexes of the outer kinetochore. On cytoplasmic microtubules, DASH complexes appear to form patches instead of rings.

Its subcellular location is the chromosome. The protein localises to the centromere. It localises to the kinetochore. The protein resides in the cytoplasm. It is found in the cytoskeleton. Its subcellular location is the spindle. The protein localises to the nucleus. Functionally, component of the DASH complex that connects microtubules with kinetochores and couples microtubule depolymerisation to chromosome movement; it is involved in retrieving kinetochores to the spindle poles before their re-orientation on the spindle in early mitosis and allows microtubule depolymerization to pull chromosomes apart and resist detachment during anaphase. Kinetochores, consisting of a centromere-associated inner segment and a microtubule-contacting outer segment, play a crucial role in chromosome segregation by mediating the physical connection between centromeric DNA and microtubules. Kinetochores also serve as an input point for the spindle assembly checkpoint, which delays anaphase until all chromosomes have bioriented on the mitotic spindle. The polypeptide is DASH complex subunit ASK1 (Chaetomium thermophilum (strain DSM 1495 / CBS 144.50 / IMI 039719) (Thermochaetoides thermophila)).